Consider the following 1111-residue polypeptide: Cell death abnormality protein 1 (1111 aa).

A signal peptide spans 1-18 (MRLILLVLLATWQVVVDT). Residues 19-910 (RAPTFPDKLT…NGAGRSTGLT (892 aa)) lie on the Extracellular side of the membrane. Residues 41–113 (GDHVCTVKTI…QCCDGYYQTK (73 aa)) enclose the EMI domain. Intrachain disulfides connect cysteine 45-cysteine 106, cysteine 71-cysteine 80, cysteine 105-cysteine 117, cysteine 121-cysteine 130, cysteine 125-cysteine 136, cysteine 138-cysteine 147, cysteine 160-cysteine 172, cysteine 166-cysteine 179, cysteine 181-cysteine 190, cysteine 203-cysteine 215, cysteine 209-cysteine 221, cysteine 223-cysteine 232, cysteine 245-cysteine 257, cysteine 251-cysteine 264, and cysteine 266-cysteine 275. A glycan (N-linked (GlcNAc...) asparagine) is linked at asparagine 66. EGF-like domains are found at residues 118 to 148 (LPDC…KYCA), 156 to 191 (WGLG…ERCE), 199 to 233 (WGPN…EFCL), and 241 to 276 (FGAE…ALCE). N-linked (GlcNAc...) asparagine glycans are attached at residues asparagine 333 and asparagine 345. Positions 421–458 (YGPNCEKQAMCDWNHASECNPETGSCVCKPGRTGKNCS) constitute an EGF-like 5 domain. Disulfide bonds link cysteine 425–cysteine 439, cysteine 431–cysteine 446, and cysteine 448–cysteine 457. Asparagine 456 is a glycosylation site (N-linked (GlcNAc...) asparagine). Residues 629–680 (DQKCDPNTFGFLCQETVTPSPCASTDPKNGVCLSCPPGSSGIHCEHNCPAGS) form an FU repeat. The region spanning 681-716 (YGDGCQQVCSCADGHGCDPTTGECICEPGYHGKTCS) is the EGF-like 6 domain. 3 disulfide bridges follow: cysteine 685/cysteine 697, cysteine 691/cysteine 704, and cysteine 706/cysteine 715. A helical transmembrane segment spans residues 911 to 931 (WFFVLLIVALCGGLGLIALFY). The interval 931–1007 (YRNKYQKEKD…EEELENKKIH (77 aa)) is interaction with trim-21. Residues 932–1111 (RNKYQKEKDP…KKRAQDNLYT (180 aa)) lie on the Cytoplasmic side of the membrane. Disordered regions lie at residues 940–993 (DPDM…PNGL) and 1006–1111 (IHGR…NLYT). Residues 962-965 (NPLY) carry the NPXY motif. Residues 963–980 (PLYSRQSVFPDSDAFSSE) show a composition bias toward polar residues. Tyrosine 1019 bears the Phosphotyrosine; by SRC mark. Residues 1019–1022 (YASL) carry the YXXL motif. The segment covering 1030-1039 (SSSSASASAS) has biased composition (low complexity). Residues 1068–1083 (NSISPAHAVTTSNHNE) are compositionally biased toward polar residues.

Interacts (via C-terminus) with ced-6 (via PTB domain). Interacts with nck-1; the interaction is required for ced-1 degradation through the proteasome pathway. Interacts with V-ATPase vha-10. Post-translationally, phosphorylation of Tyr-1019, within the YXXL motif, by src-1 is thought to initiate phagosomal formation. In terms of processing, 'Lys-48'-linked polyubiquitination by trim-21 leads to proteasomal degradation. As to expression, expressed in engulfing cells and syncytium hypodermal cells. Ced-7 is necessary for clustering around cell corpses prior to engulfment.

Its subcellular location is the cell membrane. It is found in the cytoplasmic vesicle. It localises to the phagosome membrane. Functionally, involved in programmed cell death, also called apoptosis, in both somatic and germ cells. Acts by recruiting ced-6 to phagosomes which enables actin-dependent cytoskeletal reorganization and subsequent engulfment of the apoptotic cell corpse. Has a role in the association of ppk-3 and rab-7 with the phagosomal surface which is necessary for the incorporation of lysosomes to phagosomes during phagosome maturation. Activates the expression of unfolded protein response genes, which are involved in the immune response to live bacteria. This Caenorhabditis elegans protein is Cell death abnormality protein 1.